The sequence spans 333 residues: Thiamine-monophosphate kinase (333 aa).

Aspartate 35, threonine 50, and aspartate 51 together coordinate Mg(2+). Histidine 58 lines the substrate pocket. Position 80 (aspartate 80) interacts with Mg(2+). ATP-binding positions include tyrosine 111, 128-129 (GD), and arginine 153. Aspartate 129 provides a ligand contact to Mg(2+). A Mg(2+)-binding site is contributed by aspartate 230. Serine 232 provides a ligand contact to ATP. Position 233 (aspartate 233) interacts with Mg(2+). Positions 278 and 330 each coordinate substrate.

It belongs to the thiamine-monophosphate kinase family.

The catalysed reaction is thiamine phosphate + ATP = thiamine diphosphate + ADP. Its pathway is cofactor biosynthesis; thiamine diphosphate biosynthesis; thiamine diphosphate from thiamine phosphate: step 1/1. Functionally, catalyzes the ATP-dependent phosphorylation of thiamine-monophosphate (TMP) to form thiamine-pyrophosphate (TPP), the active form of vitamin B1. This is Thiamine-monophosphate kinase from Prochlorococcus marinus (strain SARG / CCMP1375 / SS120).